A 116-amino-acid chain; its full sequence is Nucleoid-associated protein P9515_00191 (116 aa).

Residues 89-98 show a composition bias toward basic and acidic residues; that stretch reads STTTMKERMN. The tract at residues 89-116 is disordered; that stretch reads STTTMKERMNDLTGGLNLNLPGLDNNDS. Over residues 99–116 the composition is skewed to low complexity; sequence DLTGGLNLNLPGLDNNDS.

The protein belongs to the YbaB/EbfC family. In terms of assembly, homodimer.

It localises to the cytoplasm. It is found in the nucleoid. In terms of biological role, binds to DNA and alters its conformation. May be involved in regulation of gene expression, nucleoid organization and DNA protection. This is Nucleoid-associated protein P9515_00191 from Prochlorococcus marinus (strain MIT 9515).